The following is a 116-amino-acid chain: Omega-ctenitoxin-Pn3a (116 aa).

The signal sequence occupies residues 1–19; sequence MKMKLLGIILLVSFPFVLG. The propeptide occupies 20 to 38; it reads FAGIPIEEGENSVEVGEVE. Intrachain disulfides connect Cys41/Cys58, Cys48/Cys64, Cys55/Cys90, Cys57/Cys78, Cys66/Cys76, Cys96/Cys102, and Cys106/Cys111. His115 carries the histidine amide modification.

This sequence belongs to the neurotoxin 04 (omega-agtx) family. 03 (type II/III omega-agtx) subfamily. Expressed by the venom gland.

It localises to the secreted. In terms of biological role, this toxin is a potent and practically irreversible antagonist of both Cav2.1/CACNA1A and Cav2.2/CACNA1B calcium channels, while it displays a partial and rapidly reversible block of Cav2.3/CACNA1E calcium channels and no effect on Cav3/CACNA1 calcium channels. Inhibits glutamate uptake from rat brain synaptosomes by an interaction between cysteines from both glutamate transporter and toxin. Blocks potassium-induced exocytosis of synaptic vesicles in brain cortical synaptosomes (IC(50)=1.1 nM). In rat brain, inhibits glutamate release, neuronal death and loss of neurotransmission in the hippocampus resulting from ischemia. In vivo, induces rapid general flaccid paralysis followed by death in 10-30 minutes at dose levels of 5 ug per mouse. The protein is Omega-ctenitoxin-Pn3a of Phoneutria nigriventer (Brazilian armed spider).